The chain runs to 354 residues: (R,R)-butanediol dehydrogenase (354 aa).

Positions 10–350 constitute an Enoyl reductase (ER) domain; the sequence is GDIRIEDIPE…NNESAVKIIV (341 aa). 3 residues coordinate Zn(2+): Cys-37, His-71, and Glu-157.

Belongs to the zinc-containing alcohol dehydrogenase family. Zn(2+) is required as a cofactor.

It carries out the reaction (R,R)-butane-2,3-diol + NAD(+) = (R)-acetoin + NADH + H(+). The enzyme catalyses (S)-acetoin + NAD(+) = diacetyl + NADH + H(+). Functionally, NAD-dependent butanediol dehydrogenase which catalyzes the oxidation of (R,R)-butane-2,3-diol to (3R)-acetoin and of meso-butane-2,3-diol to (3S)-acetoin. Preferentially oxidizes (R,R)-butane-2,3-diol, with a catalytic efficiency approximately fourfold higher than with meso-butane-2,3-diol. Shows a very low activity with (S,S)-butane-2,3-diol. Can also catalyze the reduction of (3R/3S)-acetoin and diacetyl in the presence of NADH. The protein is (R,R)-butanediol dehydrogenase of Neisseria gonorrhoeae (strain ATCC 700825 / FA 1090).